We begin with the raw amino-acid sequence, 471 residues long: Tetratricopeptide repeat protein 29 (471 aa).

TPR repeat units follow at residues Asp-92–Glu-131, Tyr-136–Ile-173, Ala-182–Arg-215, Val-234–Gly-267, Gly-274–Leu-307, Gly-314–Asn-347, and Ile-354–Leu-387. The segment at Ala-449–Gln-471 is disordered.

Expressed in spermatozoa (at protein level).

The protein localises to the cytoplasm. It is found in the cytoskeleton. The protein resides in the flagellum axoneme. In terms of biological role, axonemal protein which is implicated in axonemal and/or peri-axonemal structure assembly and regulates flagellum assembly and beating and therefore sperm motility. In Mus musculus (Mouse), this protein is Tetratricopeptide repeat protein 29 (Ttc29).